A 389-amino-acid chain; its full sequence is Chalcone synthase H2 (389 aa).

The active site involves Cys164.

This sequence belongs to the thiolase-like superfamily. Chalcone/stilbene synthases family.

It localises to the cytoplasm. The catalysed reaction is (E)-4-coumaroyl-CoA + 3 malonyl-CoA + 3 H(+) = 2',4,4',6'-tetrahydroxychalcone + 3 CO2 + 4 CoA. The protein operates within secondary metabolite biosynthesis; flavonoid biosynthesis. Functionally, involved in the biosynthesis of prenylated phenolics natural products which contribute to the bitter taste of beer and display broad biological activities. Chalcone synthase that can use 4-coumaroyl-CoA to produce 4,2',4',6'-tetrahydroxychalcone (also termed naringenin-chalcone or chalcone) which can, under specific conditions, spontaneously isomerize into naringenin. This is Chalcone synthase H2 from Humulus lupulus (European hop).